We begin with the raw amino-acid sequence, 284 residues long: Plastid-lipid-associated protein 6, chloroplastic (284 aa).

Residues 1–11 are compositionally biased toward low complexity; the sequence is MATSSTFSSLL. Positions 1–47 are disordered; that stretch reads MATSSTFSSLLPSPPALLSDHRSPPPSIRYSFSPLTTPKSSRLGFTV. The N-terminal 72 residues, 1–72, are a transit peptide targeting the chloroplast; that stretch reads MATSSTFSSL…SIGGESDPPP (72 aa). Serine 96, serine 105, serine 148, serine 151, and serine 155 each carry phosphoserine.

This sequence belongs to the PAP/fibrillin family. As to quaternary structure, part of the Photosystem II light-harvesting complex (LHCII). In terms of processing, phosphorylated as part of a basal defense response.

The protein resides in the plastid. It localises to the chloroplast. The protein localises to the plastoglobule. Functionally, required for plastoglobule development and resistance to multiple stresses. Regulates plastoglobule osmiophilic content. May be involved in the transport of lipophilic antioxidants in and out of the plastoglobule. This chain is Plastid-lipid-associated protein 6, chloroplastic, found in Arabidopsis thaliana (Mouse-ear cress).